The sequence spans 275 residues: MKKLVWNNYMVYNPNTIAQRMNFVKQHINYFFPMNESEKIILDNYAKKINISPHQLYSFGNMLRIQNDLNNSVSYKKKKESIKSSFSKEISNNHKNHDESIKNFIESTKIPANIVLKIIKNTPIYKEEDFDESDYIKNLKKSYYDHNKDVLNRSKKFEVCLENYLRNLGVDFKTETDIIREKLHKFTPDILLNKPIIIELNGKEYPISWIDAKNYTLIRMPFVLESLRKQSNKYNKAFGNGAFVFHYGLDSSINIPNTLILDGSKISNADNNYCL.

This is an uncharacterized protein from Acanthamoeba polyphaga mimivirus (APMV).